A 301-amino-acid polypeptide reads, in one-letter code: MEDATEMSGGAEEFAEGSKINASKNQQDDGKMFIGGLSWDTSKKDLTEYLSRFGEVVDCTIKTDPVTGRSRGFGFVLFKDAASVEKVLELKEHKLDGKLIDPKRAKALKGKEPPKKVFVGGLSPDTSEEQIKEYFGAFGEIENIELPMDTKTNERRGFCFITYTDEEPVKKLLESRYHQIGSGKCEIKVAQPKEVYRQQQQQQKGGKSNASGGRGGGRGRGRGQGQNWNQGFNNYYDQGYGNYNSAYSDQSYSGYGGYDYSGYNYPNYGYGPGYTDYSGQQSTYGKASRGGGNHQNNYQPY.

The interval 1–29 (MEDATEMSGGAEEFAEGSKINASKNQQDD) is disordered. RRM domains lie at 30 to 112 (GKMF…KGKE) and 115 to 194 (KKVF…QPKE). 2 disordered regions span residues 194-230 (EVYRQQQQQQKGGKSNASGGRGGGRGRGRGQGQNWNQ) and 269-301 (GYGPGYTDYSGQQSTYGKASRGGGNHQNNYQPY). The span at 212-224 (GGRGGGRGRGRGQ) shows a compositional bias: gly residues.

It localises to the nucleus. The protein localises to the cytoplasm. Functionally, acts as a transcriptional regulator. Binds DNA and RNA. This Gallus gallus (Chicken) protein is Heterogeneous nuclear ribonucleoprotein D-like (HNRNPDL).